Reading from the N-terminus, the 261-residue chain is Ribosomal RNA small subunit methyltransferase J (261 aa).

S-adenosyl-L-methionine is bound by residues R109–D110, E125–R126, and D179.

The protein belongs to the methyltransferase superfamily. RsmJ family.

The protein resides in the cytoplasm. It catalyses the reaction guanosine(1516) in 16S rRNA + S-adenosyl-L-methionine = N(2)-methylguanosine(1516) in 16S rRNA + S-adenosyl-L-homocysteine + H(+). In terms of biological role, specifically methylates the guanosine in position 1516 of 16S rRNA. This chain is Ribosomal RNA small subunit methyltransferase J, found in Pseudomonas paraeruginosa (strain DSM 24068 / PA7) (Pseudomonas aeruginosa (strain PA7)).